We begin with the raw amino-acid sequence, 151 residues long: Small ribosomal subunit protein uS15 (151 aa).

Belongs to the universal ribosomal protein uS15 family.

The protein is Small ribosomal subunit protein uS15 (RPS13) of Ciona intestinalis (Transparent sea squirt).